Consider the following 355-residue polypeptide: uncharacterized protein (355 aa).

The protein belongs to the ycf89 family.

The protein resides in the plastid. The protein localises to the chloroplast. This is an uncharacterized protein from Trieres chinensis (Marine centric diatom).